Reading from the N-terminus, the 522-residue chain is Putative cysteine ligase BshC (522 aa).

Residues 436–469 (SWAQAEKAKALKQLEDIEKKLRKAEERKHDDVIK) adopt a coiled-coil conformation.

It belongs to the BshC family.

The polypeptide is Putative cysteine ligase BshC (Cytophaga hutchinsonii (strain ATCC 33406 / DSM 1761 / CIP 103989 / NBRC 15051 / NCIMB 9469 / D465)).